Reading from the N-terminus, the 1377-residue chain is Protein RhsA (1377 aa).

28 tandem repeats follow at residues 330-352 (GKQV…HRHT), 353-374 (GRPE…LNPA), 375-417 (GLSY…EHAD), 418-438 (GSVT…TDAA), 439-460 (GRTT…TTPD), 461-481 (GRAS…TGPD), 482-502 (GLEL…TAPD), 503-525 (GDIT…EDAT), 526-546 (GSRK…TDCS), 547-567 (GYVT…HREE), 568-588 (GLSQ…KDTQ), 589-609 (GHET…IAPD), 610-629 (GSRN…TTQG), 630-650 (GLTR…TSEN), 651-671 (GSHT…TGFD), 672-691 (GRTQ…SEDE), 692-711 (GLVT…RTVK), 712-734 (GETA…HISE), 735-758 (GHRV…QTVH), 808-828 (GDTP…LRSF), 829-850 (GRYE…HLNS), 851-871 (LLSD…ISSP), 872-894 (RQTR…TAAN), 895-930 (LDIR…NRIA), 931-959 (RDAH…VIRT), 960-984 (DDER…TQYE), 985-1019 (EPLV…MSLS), and 1162-1186 (GTTE…HQLQ). The interval 330–1186 (GKQVRSFTYD…LNEENPHQLQ (857 aa)) is 28 X approximate tandem repeats. Residues 1356 to 1377 (DAKSTQKAWNCRHSRQSNDKKR) form a disordered region.

This sequence belongs to the RHS family.

Functionally, rhs elements have a nonessential function. They may play an important role in the natural ecology of the cell. In Escherichia coli (strain K12), this protein is Protein RhsA (rhsA).